Here is a 293-residue protein sequence, read N- to C-terminus: Phosphate import ATP-binding protein PstB (293 aa).

An ABC transporter domain is found at 46-288 (MTCRKVDVHY…PGHQLTEDYI (243 aa)). 78 to 85 (GPSGCGKS) contributes to the ATP binding site.

The protein belongs to the ABC transporter superfamily. Phosphate importer (TC 3.A.1.7) family. The complex is composed of two ATP-binding proteins (PstB), two transmembrane proteins (PstC and PstA) and a solute-binding protein (PstS).

It is found in the cell inner membrane. The catalysed reaction is phosphate(out) + ATP + H2O = ADP + 2 phosphate(in) + H(+). Part of the ABC transporter complex PstSACB involved in phosphate import. Responsible for energy coupling to the transport system. This is Phosphate import ATP-binding protein PstB from Desulfotalea psychrophila (strain LSv54 / DSM 12343).